Reading from the N-terminus, the 92-residue chain is Small ribosomal subunit protein uS19 (92 aa).

Belongs to the universal ribosomal protein uS19 family.

Its function is as follows. Protein S19 forms a complex with S13 that binds strongly to the 16S ribosomal RNA. This chain is Small ribosomal subunit protein uS19, found in Francisella philomiragia subsp. philomiragia (strain ATCC 25017 / CCUG 19701 / FSC 153 / O#319-036).